The sequence spans 467 residues: MAP kinase-interacting serine/threonine-protein kinase 2 (467 aa).

One can recognise a Protein kinase domain in the interval 83–367; it reads QLQQEILGEG…AAQVLQHPWV (285 aa). Residues 89–97 and lysine 112 each bind ATP; that span reads LGEGAYAKV. The active-site Proton acceptor is aspartate 204. Zn(2+) contacts are provided by cysteine 298, cysteine 310, and cysteine 313. A disordered region spans residues 432 to 467; the sequence is MQLSPPSESKLAKRRQQGSKGGISPPSLAPLLIVSD.

Belongs to the protein kinase superfamily. CAMK Ser/Thr protein kinase family. Requires Mg(2+) as cofactor. Zn(2+) is required as a cofactor.

The catalysed reaction is L-seryl-[protein] + ATP = O-phospho-L-seryl-[protein] + ADP + H(+). The enzyme catalyses L-threonyl-[protein] + ATP = O-phospho-L-threonyl-[protein] + ADP + H(+). Its function is as follows. May play a role in the response to environmental stress and cytokines. Appears to regulate translation by phosphorylating EIF4E, thus increasing the affinity of this protein for the 7-methylguanosine-containing mRNA cap. This chain is MAP kinase-interacting serine/threonine-protein kinase 2 (mknk2), found in Xenopus laevis (African clawed frog).